Consider the following 460-residue polypeptide: MASNSSSCPTPGGGHLNGYPVTPYAFFFPHMLGGLSPPSSLPGIQHQLPVSGYSTPSPATVETQSTSSEEIVPSPPSPPPLPRIYKPCFVCQDKSSGYHYGVSACEGCKGFFRRSIQKNMVYTCHRDKNCIINKVTRNRCQYCRLQKCFEVGMSKESVRNDRNKKKKDVPKTECSESYIVTPEVEELIEKVRKAHQETFPALCQLGKYTTNNSSEQRVSLDIDLWDKFSELSTKCIIKTVEFAKQLPGFTTLTIADQITLLKAACLDILILRICTRYTPEQDTMTFSDGLTLNRTQMHNAGFGPLTDLVFAFANQLLPLEMDDAETGLLSAICLICGDRQDLEQPDKVDKLQEPLLEALKIYVRKRRPNKPHMFPKMLMKITDLRSISAKGAERVITLKMEIPGSMPPLIQEMLENSEGMDTLGGQPGGPRTGGLGPPPGSCSPSLSPSSTRSSPATHSP.

The segment at 1–87 (MASNSSSCPT…PPPLPRIYKP (87 aa)) is modulating. The disordered stretch occupies residues 46 to 78 (HQLPVSGYSTPSPATVETQSTSSEEIVPSPPSP). Residues 52–69 (GYSTPSPATVETQSTSSE) show a composition bias toward polar residues. 2 consecutive NR C4-type zinc fingers follow at residues 88-108 (CFVCQDKSSGYHYGVSACEGC) and 124-148 (CHRDKNCIINKVTRNRCQYCRLQKC). The nuclear receptor DNA-binding region spans 88–153 (CFVCQDKSSG…RLQKCFEVGM (66 aa)). Residues 154–182 (SKESVRNDRNKKKKDVPKTECSESYIVTP) form a hinge region. One can recognise an NR LBD domain in the interval 183–417 (EVEELIEKVR…PLIQEMLENS (235 aa)). Positions 408 to 416 (PLIQEMLEN) match the 9aaTAD motif. Positions 418-460 (EGMDTLGGQPGGPRTGGLGPPPGSCSPSLSPSSTRSSPATHSP) are disordered. A compositionally biased stretch (gly residues) spans 425 to 435 (GQPGGPRTGGL). Residues 442–460 (CSPSLSPSSTRSSPATHSP) are compositionally biased toward low complexity.

Belongs to the nuclear hormone receptor family. NR1 subfamily. As to quaternary structure, heterodimer; with an RXR molecule. Binds DNA preferentially as a RAR/RXR heterodimer. Ubiquitous.

It localises to the nucleus. Receptor for retinoic acid. Retinoic acid receptors bind as heterodimers to their target response elements in response to their ligands, all-trans or 9-cis retinoic acid, and regulate gene expression in various biological processes. The RAR/RXR heterodimers bind to the retinoic acid response elements (RARE) composed of tandem 5'-AGGTCA-3' sites known as DR1-DR5. Required for hindbrain patterning and appears to be required for skin development. The polypeptide is Retinoic acid receptor alpha (RARA) (Gallus gallus (Chicken)).